Here is a 362-residue protein sequence, read N- to C-terminus: Alternative oxidase, mitochondrial (362 aa).

Residues 1–64 (MNTPKVNILH…RNFSTTSVTR (64 aa)) constitute a mitochondrion transit peptide. Residues 156–176 (LVRFIFLESIAGVPGMVAGML) form a helical membrane-spanning segment. Residues glutamate 163, glutamate 202, and histidine 205 each coordinate Fe cation. The helical transmembrane segment at 222 to 242 (LILGAQGVFFNAMFLSYLISP) threads the bilayer. 3 residues coordinate Fe cation: glutamate 253, glutamate 310, and histidine 313.

The protein belongs to the alternative oxidase family. In terms of assembly, homodimer; disulfide-linked. Fe cation is required as a cofactor.

It localises to the mitochondrion inner membrane. Functionally, catalyzes cyanide-resistant oxygen consumption. May increase respiration when the cytochrome respiratory pathway is restricted, or in response to low temperatures. The chain is Alternative oxidase, mitochondrial (aod-1) from Neurospora crassa (strain ATCC 24698 / 74-OR23-1A / CBS 708.71 / DSM 1257 / FGSC 987).